The following is a 488-amino-acid chain: (S)-N-methylcoclaurine 3'-hydroxylase isozyme 2 (488 aa).

A helical transmembrane segment spans residues 3-23 (VVTVALIAVIISSILYLLFGS). Cys-430 serves as a coordination point for heme.

The protein belongs to the cytochrome P450 family. Heme is required as a cofactor.

Its subcellular location is the endoplasmic reticulum membrane. The protein localises to the microsome membrane. The catalysed reaction is (S)-N-methylcoclaurine + reduced [NADPH--hemoprotein reductase] + O2 = (S)-3'-hydroxy-N-methylcoclaurine + oxidized [NADPH--hemoprotein reductase] + H2O + H(+). It functions in the pathway alkaloid biosynthesis; (S)-reticuline biosynthesis; (S)-reticuline from (S)-norcoclaurine: step 3/4. In terms of biological role, 3'-hydroxylation of (S)-N-methylcoclaurine. The sequence is that of (S)-N-methylcoclaurine 3'-hydroxylase isozyme 2 (CYP80B2) from Eschscholzia californica (California poppy).